A 581-amino-acid polypeptide reads, in one-letter code: Putative protein phosphatase 2C 22 (581 aa).

Residues 1 to 21 (MVISVPLFSSVLLALVVAVPA) form the signal peptide. Positions 102–478 (KYASSAMQGL…NNATAILVQF (377 aa)) constitute a PPM-type phosphatase domain. Mn(2+) is bound by residues aspartate 138, glycine 139, aspartate 373, and asparagine 469. The tract at residues 538–563 (SDEVAGGAAVAEQHQHNPEGGGEQQL) is disordered.

This sequence belongs to the PP2C family. The cofactor is Mg(2+). It depends on Mn(2+) as a cofactor.

It catalyses the reaction O-phospho-L-seryl-[protein] + H2O = L-seryl-[protein] + phosphate. The catalysed reaction is O-phospho-L-threonyl-[protein] + H2O = L-threonyl-[protein] + phosphate. The polypeptide is Putative protein phosphatase 2C 22 (Oryza sativa subsp. japonica (Rice)).